Consider the following 329-residue polypeptide: Two pore potassium channel protein sup-9 (329 aa).

The Cytoplasmic segment spans residues 1-8 (MKRQNIRT). Residues 9–29 (LSLIVCTLTYLLVGAAVFDAL) form a helical membrane-spanning segment. Residue asparagine 53 is glycosylated (N-linked (GlcNAc...) asparagine). Positions 80-100 (FSGAFYFATTVITTIGYGHST) form an intramembrane region, pore-forming. The Selectivity filter signature appears at 93-98 (TIGYGH). The helical transmembrane segment at 108 to 128 (VFCMLYALAGIPLGLIMFQSI) threads the bilayer. Over 129-157 (GERMNTFAAKLLRFIRRAAGKQPIVTSSD) the chain is Cytoplasmic. Residues 158–178 (LIIFCTGWGGLLIFGGAFMFS) traverse the membrane as a helical segment. An N-linked (GlcNAc...) asparagine glycan is attached at asparagine 182. Residues 186 to 206 (FDAVYYCFVTLTTIGFGDYVA) constitute an intramembrane region (pore-forming). The Selectivity filter motif lies at 198 to 203 (TIGFGD). A helical membrane pass occupies residues 220–240 (VFFSLVFILFGLTVISAAMNL). Residues 241 to 329 (LVLRFLTMNT…FSGMTTRPKY (89 aa)) lie on the Cytoplasmic side of the membrane. Positions 289-296 (SLASCSCY) are may be important for regulation by and/or interaction with sup-10. Positions 307-329 (HRKHTEPHGGPPTFSGMTTRPKY) are disordered.

This sequence belongs to the two pore domain potassium channel (TC 1.A.1.8) family. May form a complex with the regulatory subunits unc-93 and sup-10. Low levels along surface of body-wall muscle cells, in vulval and intestinal muscles and, more weakly, in anal depressor and sphincter muscles. Also expressed in a subset of head neurons.

The protein localises to the membrane. Functionally, potassium channel involved in coordination of muscle contraction. Activity is regulated by sup-18. In Caenorhabditis elegans, this protein is Two pore potassium channel protein sup-9.